The sequence spans 634 residues: Tyrosine-protein kinase transforming protein erbB (634 aa).

The 268-residue stretch at 132-399 (FKKVKVLGSG…KMARDPPRYL (268 aa)) folds into the Protein kinase domain. Residues 138–146 (LGSGAFGTV) and lysine 165 each bind ATP. Aspartate 257 (proton acceptor) is an active-site residue.

This sequence belongs to the protein kinase superfamily. Tyr protein kinase family. EGF receptor subfamily.

The enzyme catalyses L-tyrosyl-[protein] + ATP = O-phospho-L-tyrosyl-[protein] + ADP + H(+). The polypeptide is Tyrosine-protein kinase transforming protein erbB (V-ERBB) (Avian leukosis virus (ALV)).